Here is a 143-residue protein sequence, read N- to C-terminus: Dehydrin DHN2 (143 aa).

The segment covering 1–10 has biased composition (polar residues); that stretch reads MEYQGQTGHA. Residues 1–143 are disordered; that stretch reads MEYQGQTGHA…IKEKLPGGQH (143 aa). Over residues 24–34 the composition is skewed to gly residues; sequence GHGGATGGPTG. Over residues 35–46 the composition is skewed to low complexity; that stretch reads THGAAAAAAGTG. Positions 51–61 are enriched in basic and acidic residues; it reads TRDDHKTDGVL. Residues 62 to 71 are compositionally biased toward low complexity; the sequence is RRSGSSSSSS. Basic and acidic residues predominate over residues 86–101; it reads KEKIKEKLPGGAHKDA. The segment covering 109–123 has biased composition (low complexity); the sequence is AAGEYAGTGTHGAEA. Over residues 124–143 the composition is skewed to basic and acidic residues; sequence TGEKKGVMDKIKEKLPGGQH.

Belongs to the plant dehydrin family.

This Hordeum vulgare (Barley) protein is Dehydrin DHN2 (DHN2).